A 1142-amino-acid polypeptide reads, in one-letter code: MLLSCRHGASSPKLDNLVPSGKMKILLVFLGLLCYSAAMPMQMPRMPGFSSKSEEMMRYGHFNFMNAPHMAHLGTLYGNGMQLPQFFPQYQMPMWPQPPPNKKHPQKPSASKQQSKTDPAPESQKPNQPQPKTPTPKQPLNEPSPTPTQPEEETQTPQAFPPFGNGLFPYQQPLWHVPHRIPPGYGRPPTSNEEGGNPYFGFFGYHGFGGRPPYYSEEMFEQDFEKPKEKDPPKTETPATEPSVNTTVPETNSTQPNAPNPRGNDTSPTGTSGQGPNPRSNPTGQNGPAVNVSGQGVPRSQSPWGPRQTIIHENYPNPNIRGFPARRQWRPPGPAMGHRRNGPFYRNQQIQRGPRWNSFTLEGKQAVRPGYPTYRRVYGSTARSNPPNYAGNSANLRRKPEGPNKNPMVTNVAPPGPKHGTVDQNENIQNPREKQVSQKERTVVPTRDPSGPWRNSQDYGINKSNYKLPQPEDNMLVPNFNSIDQRENSYYPRGESKRAPNSDGQTQTQIIPKGIVLEPRRIPYESETNQPELKHSAYQPVYTEGIPSPAKEHFPAGRNTWNQQEISPPFKEDPGRQEEHLPHLSHGSRVHVYYPDYNPYDPRENSPYLRSNTWYERDDSPNTMGQPENPHYPMNTPDPKETIPYNEEDPIDPTGDEHFPGQSRWDMEELSFKEDPTVRHYEGEQYTSNQPKEYLPYSLDNPSKPREDFLYGEFYPWNPEENFPSYNTAPTVSSPVESRGYYANNAVGQEESTMFPSWSSWDPRIQAQGQKEGRPYLNRNFWDQSTNLYKTPTSSPHQKENQPYSNNSPAGLQKNPTWHEGENLNYGMQITRLNSPERDHLAFPDLIPPDYPGGQKESHVFHLSQRGPCCAGGSMWPKNNPLALQDYTQSFGLAPGENPDTSIGYAEDSHIKYARQTVSPTSIVPGQRNSSEKILPGESQNPSPFKDDVSTLRRSTPCSVKSQLSQRGIMPLPEANSLQSKNTPCLTSDLGGDGNNVLEQIFEGNQLNERTVDLTPEQLVFGTPDKEPRPEGIPNEMQGNESERQQQRQSSILQLPCFGSKLANYHTSSIGTPSSLGRQDSFDGDPIMPTETPNSLAGLATGAQFQNINVDPLNEDEHTPFDSLQIGTNPQDQVQDCLLLQA.

The N-terminal stretch at 1-38 (MLLSCRHGASSPKLDNLVPSGKMKILLVFLGLLCYSAA) is a signal peptide. A Phosphoserine modification is found at serine 53. 4 disordered regions span residues 90–347 (YQMP…FYRN), 374–513 (YRRV…IIPK), 543–587 (TEGI…LSHG), and 603–662 (RENS…FPGQ). The span at 128-148 (QPQPKTPTPKQPLNEPSPTPT) shows a compositional bias: pro residues. Serine 191 and serine 216 each carry phosphoserine. A compositionally biased stretch (basic and acidic residues) spans 223 to 234 (DFEKPKEKDPPK). 2 stretches are compositionally biased toward polar residues: residues 243 to 303 (SVNT…SQSP) and 381 to 395 (TARSNPPNYAGNSAN). N-linked (GlcNAc...) asparagine glycosylation is found at asparagine 245, asparagine 252, asparagine 264, and asparagine 291. A propeptide spanning residues 277-514 (NPRSNPTGQN…QTQTQIIPKG (238 aa)) is cleaved from the precursor. The span at 431 to 442 (PREKQVSQKERT) shows a compositional bias: basic and acidic residues. The span at 453–467 (WRNSQDYGINKSNYK) shows a compositional bias: polar residues. Asparagine 462 carries N-linked (GlcNAc...) asparagine glycosylation. Proline 547 is subject to Hydroxyproline. Positions 570-582 (FKEDPGRQEEHLP) are enriched in basic and acidic residues. Positions 666–669 (DMEE) are excised as a propeptide. Positions 787–816 (NLYKTPTSSPHQKENQPYSNNSPAGLQKNP) are enriched in polar residues. Disordered regions lie at residues 787 to 820 (NLYKTPTSSPHQKENQPYSNNSPAGLQKNPTWHE), 921 to 965 (TSIV…SQLS), and 1020 to 1049 (VFGTPDKEPRPEGIPNEMQGNESERQQQRQ). Asparagine 929 carries N-linked (GlcNAc...) asparagine glycosylation. Residues 952 to 965 (LRRSTPCSVKSQLS) are compositionally biased toward polar residues. An N-linked (GlcNAc...) asparagine glycan is attached at asparagine 1040.

In terms of processing, proteolytically cleaved into several smaller polypeptides. Cleavage of N-terminal region of enamelin occurs soon after secretion. Phosphorylated by FAM20C in vitro. In terms of tissue distribution, expressed by secretory-phase ameloblasts. Intact enamelin and large-molecular-weight enamelins are limited to the most superficial layer of the developing enamel matrix, while low-molecular-weight enamelins are observed in deeper enamelin. Preferential localization among the crystallites in rod and interrod enamel.

It localises to the secreted. Its subcellular location is the extracellular space. The protein resides in the extracellular matrix. Involved in the mineralization and structural organization of enamel. Involved in the extension of enamel during the secretory stage of dental enamel formation. This chain is Enamelin (ENAM), found in Sus scrofa (Pig).